We begin with the raw amino-acid sequence, 345 residues long: Cytoskeleton protein RodZ (345 aa).

At methionine 1–glycine 111 the chain is on the cytoplasmic side. Residues leucine 19–leucine 79 form the HTH cro/C1-type domain. Residues glutamine 30–glutamate 49 constitute a DNA-binding region (H-T-H motif). Residues tryptophan 112–tryptophan 132 form a helical; Signal-anchor for type II membrane protein membrane-spanning segment. The Periplasmic segment spans residues tryptophan 133–glutamate 345. A disordered region spans residues serine 151 to glycine 260. A compositionally biased stretch (polar residues) spans proline 188 to histidine 225. Residues alanine 229–glutamine 241 show a composition bias toward low complexity.

The protein belongs to the RodZ family.

It is found in the cell inner membrane. Functionally, cytoskeletal protein that is involved in cell-shape control through regulation of the length of the long axis. This Yersinia pestis (strain Pestoides F) protein is Cytoskeleton protein RodZ.